Reading from the N-terminus, the 234-residue chain is 2-hydroxy-3-keto-5-methylthiopentenyl-1-phosphate phosphatase (234 aa).

This sequence belongs to the HAD-like hydrolase superfamily. MtnX family.

It catalyses the reaction 2-hydroxy-5-methylsulfanyl-3-oxopent-1-enyl phosphate + H2O = 1,2-dihydroxy-5-(methylsulfanyl)pent-1-en-3-one + phosphate. The protein operates within amino-acid biosynthesis; L-methionine biosynthesis via salvage pathway; L-methionine from S-methyl-5-thio-alpha-D-ribose 1-phosphate: step 4/6. Its function is as follows. Dephosphorylates 2-hydroxy-3-keto-5-methylthiopentenyl-1-phosphate (HK-MTPenyl-1-P) yielding 1,2-dihydroxy-3-keto-5-methylthiopentene (DHK-MTPene). This chain is 2-hydroxy-3-keto-5-methylthiopentenyl-1-phosphate phosphatase, found in Bacillus velezensis (strain DSM 23117 / BGSC 10A6 / LMG 26770 / FZB42) (Bacillus amyloliquefaciens subsp. plantarum).